The sequence spans 582 residues: MKSIILFVLSLLLILEKQAAVMGQKGGSKGQLPSGSSQFPHGQKGQHYFGQKDQQHTKSKGSFSIQHTYHVDINDHDWTRKSQQYDLNALHKATKSKQHLGGSQQLLNYKQEGRDHDKSKGHFHMIVIHHKGGQAHHGTQNPSQDQGNSPSGKGLSSQCSNTEKRLWVHGLSKEQASASGAQKGRTQGGSQSSYVLQTEELVVNKQQRETKNSHQNKGHYQNVVDVREEHSSKLQTSLHPAHQDRLQHGPKDIFTTQDELLVYNKNQHQTKNLSQDQEHGRKAHKISYPSSRTEERQLHHGEKSVQKDVSKGSISIQTEEKIHGKSQNQVTIHSQDQEHGHKENKISYQSSSTEERHLNCGEKGIQKGVSKGSISIQTEEQIHGKSQNQVRIPSQAQEYGHKENKISYQSSSTEERRLNSGEKDVQKGVSKGSISIQTEEKIHGKSQNQVTIPSQDQEHGHKENKMSYQSSSTEERRLNYGGKSTQKDVSQSSISFQIEKLVEGKSQIQTPNPNQDQWSGQNAKGKSGQSADSKQDLLSHEQKGRYKQESSESHNIVITEHEVAQDDHLTQQYNEDRNPIST.

Residues 1–23 (MKSIILFVLSLLLILEKQAAVMG) form the signal peptide. The interval 24–59 (QKGGSKGQLPSGSSQFPHGQKGQHYFGQKDQQHTKS) is disordered. The span at 31-40 (QLPSGSSQFP) shows a compositional bias: polar residues. Repeat copies occupy residues 70–129 (HVDI…IVIH), 141–200 (NPSQ…QTEE), and 201–260 (LVVN…QDEL). The interval 70 to 559 (HVDINDHDWT…SSESHNIVIT (490 aa)) is repeat-rich region. Disordered stretches follow at residues 132–160 (GGQA…SQCS), 173–194 (KEQA…QSSY), 228–248 (EEHS…RLQH), and 269–582 (QTKN…PIST). 2 stretches are compositionally biased toward polar residues: residues 137–160 (HGTQ…SQCS) and 174–194 (EQAS…QSSY). Residues 261–500 (LVYNKNQHQT…QSSISFQIEK (240 aa)) are 4 X 60 AA tandem repeats, type I. N-linked (GlcNAc...) asparagine glycosylation is present at asparagine 272. Basic and acidic residues predominate over residues 292–310 (RTEERQLHHGEKSVQKDVS). A compositionally biased stretch (polar residues) spans 325 to 334 (KSQNQVTIHS). A compositionally biased stretch (basic and acidic residues) spans 335–345 (QDQEHGHKENK). Residues 372 to 397 (GSISIQTEEQIHGKSQNQVRIPSQAQ) show a composition bias toward polar residues. Residues 413 to 426 (TEERRLNSGEKDVQ) show a composition bias toward basic and acidic residues. Polar residues predominate over residues 445–455 (KSQNQVTIPSQ). Residues 456–465 (DQEHGHKENK) show a composition bias toward basic and acidic residues. Composition is skewed to polar residues over residues 482–496 (GKST…SISF) and 506–532 (SQIQ…QSAD). A 3-2 repeat occupies 501-559 (LVEGKSQIQTPNPNQDQWSGQNAKGKSGQSADSKQDLLSHEQKGRYKQESSESHNIVIT). Composition is skewed to basic and acidic residues over residues 533–552 (SKQD…ESSE) and 559–582 (TEHE…PIST).

This sequence belongs to the semenogelin family. As to quaternary structure, interacts with SERPINA5. Post-translationally, semenogelin-2 is thought to form both the 71 kDa polypeptide and, in its glycosylated form, the 76 kDa polypeptide. In terms of tissue distribution, seminal vesicles, and to a much lesser extent, epididymis.

It is found in the secreted. Its function is as follows. Participates in the formation of a gel matrix (sperm coagulum) entrapping the accessory gland secretions and ejaculated spermatozoa. This chain is Semenogelin-2 (SEMG2), found in Homo sapiens (Human).